Reading from the N-terminus, the 669-residue chain is Translation factor GUF1, mitochondrial (669 aa).

The N-terminal 49 residues, 1-49 (MWTLVGRGWGCARALAPRATGAALLVAPGPRSAPTLGAAPESWATDRLY), are a transit peptide targeting the mitochondrion. Positions 66–247 (ENIRNFSIVA…AIIERIPPPK (182 aa)) constitute a tr-type G domain. Residues 75–82 (AHVDHGKS), 140–144 (DTPGH), and 194–197 (NKID) contribute to the GTP site.

It belongs to the TRAFAC class translation factor GTPase superfamily. Classic translation factor GTPase family. LepA subfamily.

It localises to the mitochondrion inner membrane. It carries out the reaction GTP + H2O = GDP + phosphate + H(+). Its function is as follows. Promotes mitochondrial protein synthesis. May act as a fidelity factor of the translation reaction, by catalyzing a one-codon backward translocation of tRNAs on improperly translocated ribosomes. Binds to mitochondrial ribosomes in a GTP-dependent manner. This is Translation factor GUF1, mitochondrial from Homo sapiens (Human).